Here is a 377-residue protein sequence, read N- to C-terminus: Hydrogenase maturation factor HypD (377 aa).

Cys-41, Cys-69, and Cys-72 together coordinate Fe cation.

This sequence belongs to the HypD family. The cofactor is [4Fe-4S] cluster.

It participates in protein modification; [NiFe] hydrogenase maturation. Functionally, involved in the maturation of [NiFe] hydrogenases. Involved in the biosynthesis of the Fe(CN)(2)CO cofactor. This chain is Hydrogenase maturation factor HypD, found in Rhodobacter capsulatus (Rhodopseudomonas capsulata).